Here is a 583-residue protein sequence, read N- to C-terminus: Aspartate--tRNA ligase (583 aa).

L-aspartate is bound at residue Glu-169. The segment at 193–196 is aspartate; sequence QLFK. Arg-215 contributes to the L-aspartate binding site. ATP is bound by residues 215–217 and Gln-224; that span reads RDE. His-443 contributes to the L-aspartate binding site. Glu-477 contacts ATP. Arg-484 contributes to the L-aspartate binding site. 529-532 serves as a coordination point for ATP; that stretch reads GIDR.

Belongs to the class-II aminoacyl-tRNA synthetase family. Type 1 subfamily. As to quaternary structure, homodimer.

It is found in the cytoplasm. It catalyses the reaction tRNA(Asp) + L-aspartate + ATP = L-aspartyl-tRNA(Asp) + AMP + diphosphate. Its function is as follows. Catalyzes the attachment of L-aspartate to tRNA(Asp) in a two-step reaction: L-aspartate is first activated by ATP to form Asp-AMP and then transferred to the acceptor end of tRNA(Asp). This Stenotrophomonas maltophilia (strain K279a) protein is Aspartate--tRNA ligase.